The sequence spans 540 residues: Acrosin-binding protein (540 aa).

A signal peptide spans 1–24 (MKLAASFLLMLLEVLLLPETPLSA). The segment at 25-104 (EEALASTPGS…ASWFESFCQF (80 aa)) is pro-ACR binding. Residues 25 to 272 (EEALASTPGS…NPSFFTPRVR (248 aa)) constitute a propeptide, removed in mature form. The disordered stretch occupies residues 181–266 (SLSLGGKEQQ…SKSLSSNPSF (86 aa)). A compositionally biased stretch (basic and acidic residues) spans 195 to 213 (LGLEQQHKQEQIQEHKLEE). Acidic residues predominate over residues 214-241 (AQEQEEQEEEEEEEEAKQEEGQGTEEGL). Residues 256–266 (QSKSLSSNPSF) are compositionally biased toward polar residues. Positions 316-424 (LPHTETLMVL…NQAKIPEKGR (109 aa)) are pro-ACR binding.

Binds pro-ACR. Does not bind the mature form of ACR. In terms of assembly, binds pro-ACR. Does not bind mature form of ACR. The N-terminus is blocked. In terms of processing, phosphorylated on Tyr residues in capacitated sperm. Post-translationally, synthesized as a 60-kDa precursor, the 32-kDa mature form is post-translationally produced by the removal of the N-terminal half of the precursor during sperm maturation in the testis and/or epididymis.

The protein resides in the cytoplasmic vesicle. Its subcellular location is the secretory vesicle. The protein localises to the acrosome. Its function is as follows. Acrosomal protein that maintains proacrosin (pro-ACR) as an enzymatically inactive zymogen in the acrosome. Involved also in the acrosome formation. Functionally, maintains pro-ACR as an enzymatically inactive zymogen in the acrosome until acrosomal exocytosis. Partially also contributes to the assembly of acrosomal proteins to form an acrosomal granule. In terms of biological role, rodent specific isoform that participates in the formation of the acrosomal granule into the center of the acrosomal vesicle during early spermiogenesis. In the fertilization process promotes ACR release from the acrosome during acrosomal exocytosis. In Rattus norvegicus (Rat), this protein is Acrosin-binding protein.